Consider the following 553-residue polypeptide: Fusion glycoprotein F0 (553 aa).

The signal sequence occupies residues 1 to 31; sequence MGSRSSTRIPVPPMLIIRIVLTLSCIRLTSS. Residues 32–500 lie on the Extracellular side of the membrane; sequence LDGRPLAAAG…VNVRLTSTSA (469 aa). 5 disulfides stabilise this stretch: C76–C199, C338–C347, C362–C370, C394–C399, and C401–C424. N-linked (GlcNAc...) asparagine; by host glycosylation is present at N85. Residues 117-141 are fusion peptide; it reads FIGAIIGSVALGVATAAQITAASAL. Residues 142–170 adopt a coiled-coil conformation; it reads IQANQNAANILRLKESIAATNEAVHEVTD. The N-linked (GlcNAc...) asparagine; by host glycan is linked to N191. An N-linked (GlcNAc...) asparagine; by host glycan is attached at N366. N-linked (GlcNAc...) asparagine; by host glycans are attached at residues N447 and N471. Residues 466-491 adopt a coiled-coil conformation; it reads ELGNVNNSISNALNKLEESNSKLDKV. A helical transmembrane segment spans residues 501-521; it reads LITYIVLTVISLVFGVLSLVL. Over 522 to 553 the chain is Cytoplasmic; sequence ACYLMYKQKAQQKTLLWLGNNTLDQMRATTKI. C523 carries S-palmitoyl cysteine; by host lipidation.

It belongs to the paramyxoviruses fusion glycoprotein family. Homotrimer of disulfide-linked F1-F2. Post-translationally, the inactive precursor F0 is glycosylated and proteolytically cleaved into F1 and F2 to be functionally active. The cleavage is mediated by cellular proteases during the transport and maturation of the polypeptide.

It localises to the virion membrane. It is found in the host cell membrane. In terms of biological role, class I viral fusion protein. Under the current model, the protein has at least 3 conformational states: pre-fusion native state, pre-hairpin intermediate state, and post-fusion hairpin state. During viral and plasma cell membrane fusion, the heptad repeat (HR) regions assume a trimer-of-hairpins structure, positioning the fusion peptide in close proximity to the C-terminal region of the ectodomain. The formation of this structure appears to drive apposition and subsequent fusion of viral and plasma cell membranes. Directs fusion of viral and cellular membranes leading to delivery of the nucleocapsid into the cytoplasm. This fusion is pH independent and occurs directly at the outer cell membrane. The trimer of F1-F2 (F protein) probably interacts with HN at the virion surface. Upon HN binding to its cellular receptor, the hydrophobic fusion peptide is unmasked and interacts with the cellular membrane, inducing the fusion between cell and virion membranes. Later in infection, F proteins expressed at the plasma membrane of infected cells could mediate fusion with adjacent cells to form syncytia, a cytopathic effect that could lead to tissue necrosis. In Newcastle disease virus (strain Her/33) (NDV), this protein is Fusion glycoprotein F0 (F).